Consider the following 643-residue polypeptide: Transmembrane 9 superfamily member 4 (643 aa).

Positions 1–23 (MAAAMIWWPRFLLLLCLTCKGST) are cleaved as a signal peptide. At 24–282 (FYVPGVAPIN…TMSDVQIHWF (259 aa)) the chain is on the extracellular side. A helical membrane pass occupies residues 283–303 (SIINSVVVVFFLSGILSMIII). Residues 304 to 347 (RTLRKDIANYNKEDDIEDTMEESGWKLVHGDVFRPPQYPMILSS) are Cytoplasmic-facing. Residue Tyr313 is modified to Phosphotyrosine. Residues 348-368 (LLGSGIQLFCMILIVIFVAML) form a helical membrane-spanning segment. At 369 to 377 (GMLSPSSRG) the chain is on the extracellular side. The helical transmembrane segment at 378–398 (ALMTTACFLFMFMGVFGGFSA) threads the bilayer. Over 399–417 (GRLYRTLKGHRWKKGAFCT) the chain is Cytoplasmic. Residues 418–438 (ATLYPGVVFGICFVLNCFIWG) traverse the membrane as a helical segment. At 439 to 450 (KHSSGAVPFPTM) the chain is on the extracellular side. The chain crosses the membrane as a helical span at residues 451-471 (VALLCMWFGISLPLVYLGYYF). Topologically, residues 472 to 502 (GFRKQPYDNPVRTNQIPRQIPEQRWYMNRFV) are cytoplasmic. The helical transmembrane segment at 503–523 (GILMAGILPFGAMFIELFFIF) threads the bilayer. At 524-536 (SAIWENQFYYLFG) the chain is on the extracellular side. A helical transmembrane segment spans residues 537–557 (FLFLVFIILVVSCSQISIVMV). The Cytoplasmic segment spans residues 558-571 (YFQLCAEDYRWWWR). Residues 572–592 (NFLVSGGSAFYVLVYAIFYFV) traverse the membrane as a helical segment. Residues 593–599 (NKLDIVE) are Extracellular-facing. The helical transmembrane segment at 600-620 (FIPSLLYFGYTTLMVLSFWLL) threads the bilayer. Residues 621 to 643 (TGTIGFYAAYMFVRKIYAAVKID) are Cytoplasmic-facing.

The protein belongs to the nonaspanin (TM9SF) (TC 9.A.2) family.

It localises to the membrane. The protein localises to the golgi apparatus. Its subcellular location is the early endosome. Its function is as follows. Associates with proteins harboring glycine-rich transmembrane domains and ensures their efficient localization to the cell surface. This is Transmembrane 9 superfamily member 4 (Tm9sf4) from Rattus norvegicus (Rat).